A 215-amino-acid chain; its full sequence is UPF0502 protein PP_2442 (215 aa).

Belongs to the UPF0502 family.

This Pseudomonas putida (strain ATCC 47054 / DSM 6125 / CFBP 8728 / NCIMB 11950 / KT2440) protein is UPF0502 protein PP_2442.